A 156-amino-acid polypeptide reads, in one-letter code: MASTSGVGSVGPASCCETQKPHTIRELCLAQQITYPCIQLCCHYCYKILSVLDIYAFDQSCLYLSWGEGGPTGICSQCTRVLARLEFTARHEVSCAASRLPHFIGQSLSDLEVRCVRCLALLQSVEKDYILREDLSVHRIGGIWRGTCVRCMVGLY.

Zinc fingers lie at residues cysteine 42–cysteine 78 and cysteine 115–cysteine 151.

It belongs to the papillomaviridae E6 protein family. Forms homodimers. Interacts with ubiquitin-protein ligase UBE3A/E6-AP; this interaction stimulates UBE3A ubiquitin activity. Interacts with host BAK1.

The protein localises to the host cytoplasm. Its subcellular location is the host nucleus. Plays a major role in the induction and maintenance of cellular transformation. E6 associates with host UBE3A/E6-AP ubiquitin-protein ligase and modulates its activity. Protects host keratinocytes from apoptosis by mediating the degradation of host BAK1. May also inhibit host immune response. This chain is Protein E6, found in Homo sapiens (Human).